The sequence spans 318 residues: MAPVTPDAVNARQQRPADPALRRLMHPHHRNYTASKASAHSVKSVSRCGKSRSELGRMERVGSVARSICSRHTRHGVDRSHFSLRDFFRGISANFELGKDFLREMNTPIHVSEAVFLPLSLCTLSPGRCLRLSPFGHSLTLGSHCEICINRSQVHVPQEFSSTQLSFFNNVHKIIPNKTFYVSLLSSSPSAVKAGLSQPSLLYAYLVTGHFCGTICPIFSTNGKGRLIMHLLLQGTSLHIPETCLKLLCENIGPTYELAVDLVGDAFCIKVSPRDTVYEKAVNVDEDAIYEAIKDLECGDELRLQIINYTQLILENKQ.

A CCCH-type zinc finger spans residues 129 to 239; that stretch reads CLRLSPFGHS…HLLLQGTSLH (111 aa).

Belongs to the herpesviridae NEC1 protein family. As to quaternary structure, forms a heterodimeric viral nuclear egress complex (NEC) with NEC2. Interacts with capsid vertex specific component 2/CVC2; this interaction directs the capsid to the host inner nuclear membrane to initiate budding. In terms of processing, phosphorylated at serine residues in the N-terminus. This phosphorylation regulates the localization within the inner nuclear membrane.

The protein localises to the host nucleus inner membrane. In terms of biological role, plays an essential role in virion nuclear egress, the first step of virion release from infected cell. Within the host nucleus, NEC1 interacts with the newly formed capsid through the vertexes and directs it to the inner nuclear membrane by associating with NEC2. Induces the budding of the capsid at the inner nuclear membrane as well as its envelopment into the perinuclear space. There, the NEC1/NEC2 complex promotes the fusion of the enveloped capsid with the outer nuclear membrane and the subsequent release of the viral capsid into the cytoplasm where it will reach the secondary budding sites in the host Golgi or trans-Golgi network. The sequence is that of Nuclear egress protein 1 from Homo sapiens (Human).